The primary structure comprises 289 residues: 4-diphosphocytidyl-2-C-methyl-D-erythritol kinase (289 aa).

Residue lysine 10 is part of the active site. 95-105 is an ATP binding site; that stretch reads PVSAGMGGGSA. Residue aspartate 137 is part of the active site.

It belongs to the GHMP kinase family. IspE subfamily.

It catalyses the reaction 4-CDP-2-C-methyl-D-erythritol + ATP = 4-CDP-2-C-methyl-D-erythritol 2-phosphate + ADP + H(+). The protein operates within isoprenoid biosynthesis; isopentenyl diphosphate biosynthesis via DXP pathway; isopentenyl diphosphate from 1-deoxy-D-xylulose 5-phosphate: step 3/6. Its function is as follows. Catalyzes the phosphorylation of the position 2 hydroxy group of 4-diphosphocytidyl-2C-methyl-D-erythritol. In Ligilactobacillus salivarius (strain UCC118) (Lactobacillus salivarius), this protein is 4-diphosphocytidyl-2-C-methyl-D-erythritol kinase.